Here is a 207-residue protein sequence, read N- to C-terminus: Holliday junction branch migration complex subunit RuvA (207 aa).

Residues 1 to 64 (MISYIKGELA…EDECSLFGFL (64 aa)) are domain I. A domain II region spans residues 65–143 (TRDDLSMFKM…LDEVFESALS (79 aa)). Residues 144–155 (KNKKADNNSNVS) form a flexible linker region. The tract at residues 156-207 (NVMMIRNDAVEALVSLGYSSKDALVAVKEVEDIENKDSETVLKEALKKLVKF) is domain III.

This sequence belongs to the RuvA family. Homotetramer. Forms an RuvA(8)-RuvB(12)-Holliday junction (HJ) complex. HJ DNA is sandwiched between 2 RuvA tetramers; dsDNA enters through RuvA and exits via RuvB. An RuvB hexamer assembles on each DNA strand where it exits the tetramer. Each RuvB hexamer is contacted by two RuvA subunits (via domain III) on 2 adjacent RuvB subunits; this complex drives branch migration. In the full resolvosome a probable DNA-RuvA(4)-RuvB(12)-RuvC(2) complex forms which resolves the HJ.

It localises to the cytoplasm. Functionally, the RuvA-RuvB-RuvC complex processes Holliday junction (HJ) DNA during genetic recombination and DNA repair, while the RuvA-RuvB complex plays an important role in the rescue of blocked DNA replication forks via replication fork reversal (RFR). RuvA specifically binds to HJ cruciform DNA, conferring on it an open structure. The RuvB hexamer acts as an ATP-dependent pump, pulling dsDNA into and through the RuvAB complex. HJ branch migration allows RuvC to scan DNA until it finds its consensus sequence, where it cleaves and resolves the cruciform DNA. The polypeptide is Holliday junction branch migration complex subunit RuvA (Lachnospira eligens (strain ATCC 27750 / DSM 3376 / VPI C15-48 / C15-B4) (Eubacterium eligens)).